A 517-amino-acid chain; its full sequence is Methionine aminopeptidase 1b (517 aa).

Residues 74 to 94 form a disordered region; it reads YCNKENSNNNNNNNNNNNNNL. Low complexity predominate over residues 79–94; that stretch reads NSNNNNNNNNNNNNNL. Residues 114 to 166 form a C6H2-type zinc finger; sequence ENLCSGCKKVLIKKLSCPICLKNKIFSYFCNQECFKGSWKEHQKIHENMNKEN. Cys-117, Cys-120, Cys-130, Cys-133, Cys-143, Cys-147, His-155, and His-159 together coordinate Zn(2+). His-325 is a binding site for a protein. The Zn(2+) site is built by Asp-342, Asp-353, and His-419. His-426 provides a ligand contact to a protein. Glu-452 and Glu-483 together coordinate Zn(2+).

This sequence belongs to the peptidase M24A family. Methionine aminopeptidase type 1 subfamily. As to quaternary structure, associates with the 60S ribosomal subunit of the 80S translational complex. The cofactor is Zn(2+). Requires Co(2+) as cofactor. It depends on Mn(2+) as a cofactor. Fe(2+) serves as cofactor.

The protein resides in the cytoplasm. It carries out the reaction Release of N-terminal amino acids, preferentially methionine, from peptides and arylamides.. With respect to regulation, inhibited by pyrimidine derivative XC11. Its function is as follows. Cotranslationally removes the N-terminal methionine from nascent proteins. The N-terminal methionine is often cleaved when the second residue in the primary sequence is small and uncharged (Met-Ala-, Cys, Gly, Pro, Ser, Thr, or Val). May play an important role in parasite growth during the blood asexual stage. This chain is Methionine aminopeptidase 1b, found in Plasmodium falciparum (isolate 3D7).